The primary structure comprises 496 residues: Acetyl-coenzyme A carboxylase carboxyl transferase subunit beta, chloroplastic (496 aa).

In terms of domain architecture, CoA carboxyltransferase N-terminal spans 229-496 (LWVQCENCYG…FFPLNKNFIK (268 aa)). Residues C233, C236, C252, and C255 each coordinate Zn(2+). The C4-type zinc finger occupies 233–255 (CENCYGLNYKKFFRLKLHICEQC).

This sequence belongs to the AccD/PCCB family. Acetyl-CoA carboxylase is a heterohexamer composed of biotin carboxyl carrier protein, biotin carboxylase and 2 subunits each of ACCase subunit alpha and ACCase plastid-coded subunit beta (accD). It depends on Zn(2+) as a cofactor.

Its subcellular location is the plastid. The protein localises to the chloroplast stroma. It catalyses the reaction N(6)-carboxybiotinyl-L-lysyl-[protein] + acetyl-CoA = N(6)-biotinyl-L-lysyl-[protein] + malonyl-CoA. The protein operates within lipid metabolism; malonyl-CoA biosynthesis; malonyl-CoA from acetyl-CoA: step 1/1. Its function is as follows. Component of the acetyl coenzyme A carboxylase (ACC) complex. Biotin carboxylase (BC) catalyzes the carboxylation of biotin on its carrier protein (BCCP) and then the CO(2) group is transferred by the transcarboxylase to acetyl-CoA to form malonyl-CoA. This chain is Acetyl-coenzyme A carboxylase carboxyl transferase subunit beta, chloroplastic, found in Ranunculus macranthus (Large buttercup).